Reading from the N-terminus, the 122-residue chain is Large ribosomal subunit protein uL14 (122 aa).

This sequence belongs to the universal ribosomal protein uL14 family. As to quaternary structure, part of the 50S ribosomal subunit. Forms a cluster with proteins L3 and L19. In the 70S ribosome, L14 and L19 interact and together make contacts with the 16S rRNA in bridges B5 and B8.

Functionally, binds to 23S rRNA. Forms part of two intersubunit bridges in the 70S ribosome. The protein is Large ribosomal subunit protein uL14 of Albidiferax ferrireducens (strain ATCC BAA-621 / DSM 15236 / T118) (Rhodoferax ferrireducens).